Consider the following 470-residue polypeptide: Pyoverdine export outer membrane protein OpmQ (470 aa).

An N-terminal signal peptide occupies residues Met1–Ala18. Cys19 carries N-palmitoyl cysteine lipidation. Cys19 is lipidated: S-diacylglycerol cysteine.

It belongs to the outer membrane factor (OMF) (TC 1.B.17) family. Part of the tripartite efflux system PvdRT-OpmQ, which is composed of an inner membrane component with both ATPase and permease domains, PvdT, a periplasmic membrane fusion protein, PvdR, and an outer membrane component, OpmQ.

It is found in the cell outer membrane. Its function is as follows. Part of the tripartite efflux system PvdRT-OpmQ required for the secretion into the extracellular milieu of the siderophore pyoverdine (PVD), which is involved in iron acquisition. The system is responsible for export of newly synthesized PVD after the final steps of biosynthesis have taken place in the periplasm. It is also responsible for recycling of PVD after internalization of ferri-PVD into the periplasm by the outer-membrane receptor FpvA and release of iron from PVD, thus making PVD available for new cycles of iron uptake. Contributes to resistance against ampicillin. The protein is Pyoverdine export outer membrane protein OpmQ of Pseudomonas putida (strain ATCC 47054 / DSM 6125 / CFBP 8728 / NCIMB 11950 / KT2440).